Here is a 247-residue protein sequence, read N- to C-terminus: ABC-type transporter ATP-binding protein EcsA (247 aa).

In terms of domain architecture, ABC transporter spans 4-234 (LSVKDLTGGY…FGMKDAALDD (231 aa)). 36–43 (GLNGAGKS) provides a ligand contact to ATP.

The protein belongs to the ABC transporter superfamily.

In terms of biological role, has a role in exoprotein production, sporulation and competence. The polypeptide is ABC-type transporter ATP-binding protein EcsA (ecsA) (Bacillus subtilis (strain 168)).